We begin with the raw amino-acid sequence, 198 residues long: ATP-dependent Clp protease proteolytic subunit (198 aa).

The active-site Nucleophile is the serine 98. Histidine 123 is an active-site residue.

The protein belongs to the peptidase S14 family. As to quaternary structure, fourteen ClpP subunits assemble into 2 heptameric rings which stack back to back to give a disk-like structure with a central cavity, resembling the structure of eukaryotic proteasomes.

The protein resides in the cytoplasm. The catalysed reaction is Hydrolysis of proteins to small peptides in the presence of ATP and magnesium. alpha-casein is the usual test substrate. In the absence of ATP, only oligopeptides shorter than five residues are hydrolyzed (such as succinyl-Leu-Tyr-|-NHMec, and Leu-Tyr-Leu-|-Tyr-Trp, in which cleavage of the -Tyr-|-Leu- and -Tyr-|-Trp bonds also occurs).. In terms of biological role, cleaves peptides in various proteins in a process that requires ATP hydrolysis. Has a chymotrypsin-like activity. Plays a major role in the degradation of misfolded proteins. This chain is ATP-dependent Clp protease proteolytic subunit, found in Bacillus velezensis (strain DSM 23117 / BGSC 10A6 / LMG 26770 / FZB42) (Bacillus amyloliquefaciens subsp. plantarum).